The following is a 446-amino-acid chain: Baeyer-Villiger oxidase mdpL (446 aa).

The protein belongs to the AflY oxidoreductase family. NADPH is required as a cofactor.

Its pathway is secondary metabolite biosynthesis. Baeyer-Villiger oxidase; part of the gene cluster that mediates the biosynthesis of monodictyphenone, a prenyl xanthone derivative. The pathway begins with the synthesis of atrochrysone thioester by the polyketide synthase (PKS) mdpG. The atrochrysone carboxyl ACP thioesterase mdpF then breaks the thioester bond and releases the atrochrysone carboxylic acid from mdpG. The atrochrysone carboxylic acid is then converted to atrochrysone which is further transformed into emodin anthrone. The next step is performed by the anthrone oxygenase mdpH that catalyzes the oxidation of emodinanthrone to emodin. Emodin is further modified to yield monodictyphenone via several steps involving mdpB, mdpC mdpJ, mdpK and mdpL. These enzymes with xptA, xptB and xptC are also proposed to be involved in the synthesis of shamixanthone from emodin. Especially, direct reduction of emodin by the short chain dehydrogenase mdpC followed by dehydration catalyzed by the scytalone dehydratase-like protein mdpB gives loss of oxygen and formation of chrysophanol intermediate in two simple steps. This Emericella nidulans (strain FGSC A4 / ATCC 38163 / CBS 112.46 / NRRL 194 / M139) (Aspergillus nidulans) protein is Baeyer-Villiger oxidase mdpL.